A 109-amino-acid chain; its full sequence is Serine protease inhibitor (109 aa).

Positions methionine 1 to alanine 28 are cleaved as a signal peptide. 5 cysteine pairs are disulfide-bonded: cysteine 43–cysteine 83, cysteine 52–cysteine 79, cysteine 58–cysteine 73, cysteine 62–cysteine 104, and cysteine 85–cysteine 98. The region spanning cysteine 43–cysteine 104 is the TIL domain.

This sequence belongs to the serine protease inhibitor-like (TIL domain-containing) family. In terms of tissue distribution, ubiquitously expressed (at protein level), including in venom glands. Found more precisely in the epidermis, fat body, gut, muscle, and venom of worker bees.

It localises to the secreted. In terms of biological role, dual role peptide that functions as a broad-spectrum antimicrobial peptide and antifibrinolytic toxin. Inhibits trypsin (IC(50)=375 nM), plasmin (IC(50)=2140 nM), and microbial serine proteases (subtilisin A (IC(50)=294 nM) and proteinase K (IC(50)=459 nM)). Exhibits antifibrinolytic activity by binding and inhibiting plasmin. Does not inhibit chymotrypsin, elastase or thrombin. Binds to microbial cell wall carbohydrates (LPS, mannan and N-acetyl-D-glucosamine) and shows antimicrobial activity (MIC=4.1 uM against B.thuringiensis, MIC=4.95 uM against E.coli, MIC=9.6 uM against the fungus B.bassiana). Does not show hemolytic activity. The protein is Serine protease inhibitor of Bombus ignitus (Bumblebee).